Reading from the N-terminus, the 1076-residue chain is Carbamoyl phosphate synthase large chain (1076 aa).

The interval 1 to 403 is carboxyphosphate synthetic domain; it reads MPKRTDIQSI…SLQKALRGLE (403 aa). ATP-binding residues include arginine 129, arginine 169, glycine 175, glycine 176, glutamate 208, leucine 210, glutamate 215, glycine 241, valine 242, histidine 243, glutamine 285, and glutamate 299. Residues 133–328 enclose the ATP-grasp 1 domain; that stretch reads DQAMKRIGLE…IAKIAAKLAV (196 aa). Mg(2+) is bound by residues glutamine 285, glutamate 299, and asparagine 301. Glutamine 285, glutamate 299, and asparagine 301 together coordinate Mn(2+). The interval 404-553 is oligomerization domain; the sequence is TGNDGLDPKV…YSSYEEECEA (150 aa). The interval 554–935 is carbamoyl phosphate synthetic domain; sequence EVSDRPKIMV…AFYKAQLGAG (382 aa). The ATP-grasp 2 domain maps to 678-869; that stretch reads QHMVDKLGLK…LAQVAARCMA (192 aa). ATP contacts are provided by arginine 714, histidine 753, leucine 755, glutamate 760, glycine 785, valine 786, histidine 787, serine 788, glutamine 828, and glutamate 840. Mg(2+) is bound by residues glutamine 828, glutamate 840, and asparagine 842. Mn(2+)-binding residues include glutamine 828, glutamate 840, and asparagine 842. An MGS-like domain is found at 936–1076; it reads EAIPALEGER…LQELHAGVSQ (141 aa). The tract at residues 936 to 1076 is allosteric domain; the sequence is EAIPALEGER…LQELHAGVSQ (141 aa).

The protein belongs to the CarB family. As to quaternary structure, composed of two chains; the small (or glutamine) chain promotes the hydrolysis of glutamine to ammonia, which is used by the large (or ammonia) chain to synthesize carbamoyl phosphate. Tetramer of heterodimers (alpha,beta)4. Mg(2+) serves as cofactor. The cofactor is Mn(2+).

It catalyses the reaction hydrogencarbonate + L-glutamine + 2 ATP + H2O = carbamoyl phosphate + L-glutamate + 2 ADP + phosphate + 2 H(+). It carries out the reaction hydrogencarbonate + NH4(+) + 2 ATP = carbamoyl phosphate + 2 ADP + phosphate + 2 H(+). Its pathway is amino-acid biosynthesis; L-arginine biosynthesis; carbamoyl phosphate from bicarbonate: step 1/1. The protein operates within pyrimidine metabolism; UMP biosynthesis via de novo pathway; (S)-dihydroorotate from bicarbonate: step 1/3. Large subunit of the glutamine-dependent carbamoyl phosphate synthetase (CPSase). CPSase catalyzes the formation of carbamoyl phosphate from the ammonia moiety of glutamine, carbonate, and phosphate donated by ATP, constituting the first step of 2 biosynthetic pathways, one leading to arginine and/or urea and the other to pyrimidine nucleotides. The large subunit (synthetase) binds the substrates ammonia (free or transferred from glutamine from the small subunit), hydrogencarbonate and ATP and carries out an ATP-coupled ligase reaction, activating hydrogencarbonate by forming carboxy phosphate which reacts with ammonia to form carbamoyl phosphate. The polypeptide is Carbamoyl phosphate synthase large chain (Halomonas eurihalina).